The sequence spans 143 residues: MRLLGLDVGSKTVGVAISDPLGITAQELETIKIDESKFSFGLRQIRRIVRKYDVEGFVLGLPKNMDGSSGHSVERSKQYGERLKEKFDLPVYYMDERLTTVQADRILVEEAGVHDRVERKKVIDQMAAVLILQNYLEATRKDN.

Belongs to the YqgF nuclease family.

The protein localises to the cytoplasm. Its function is as follows. Could be a nuclease involved in processing of the 5'-end of pre-16S rRNA. This is Putative pre-16S rRNA nuclease from Lactobacillus johnsonii (strain CNCM I-12250 / La1 / NCC 533).